A 402-amino-acid chain; its full sequence is Putative neuropeptide Y receptor 11 (402 aa).

Over 1–45 the chain is Extracellular; sequence MGSVNESCDNYVEIFNKINYFFRDDQVINGTEYSPKEFGYFITFA. N-linked (GlcNAc...) asparagine glycans are attached at residues Asn-5 and Asn-29. Residues 46–66 form a helical membrane-spanning segment; sequence YMLIILFGAIGNFLTIIVVIL. The Cytoplasmic portion of the chain corresponds to 67-85; that stretch reads NPAMRTTRNFFILNLALSD. The chain crosses the membrane as a helical span at residues 86 to 106; the sequence is FFVCIVTAPTTLYTVLYMFWP. At 107-122 the chain is on the extracellular side; the sequence is FSRTLCKIAGSLQGFN. Residues Cys-112 and Cys-194 are joined by a disulfide bond. Residues 123 to 143 form a helical membrane-spanning segment; sequence IFLSTFSIASIAVDRYVLIIF. The Cytoplasmic portion of the chain corresponds to 144 to 152; it reads PTKRERQQN. The chain crosses the membrane as a helical span at residues 153–173; it reads LSFCFFIMIWVISLILAVPLL. The Extracellular portion of the chain corresponds to 174 to 210; it reads QASDLTPVFVEPSCDLALYICHEQNEIWEKMIISKGT. A helical membrane pass occupies residues 211 to 231; it reads YTLAVLITQYAFPLFSLVFAY. At 232–272 the chain is on the cytoplasmic side; that stretch reads SRIAHRMKLRFANRNQNVTTNTNTSQRRRSVVERQRRTHLL. A helical transmembrane segment spans residues 273–293; that stretch reads LVCVVAVFAVAWLPLNVFHIF. At 294–306 the chain is on the extracellular side; it reads NTFELVNSFSVTT. Residues 307–328 form a helical membrane-spanning segment; sequence FSICHCLAMCSACLNPLIYAFF. Topologically, residues 329–402 are cytoplasmic; sequence NHNFRIEFMH…LSAMEQDEQL (74 aa).

This sequence belongs to the G-protein coupled receptor 1 family.

It is found in the cell membrane. In terms of biological role, could be a receptor for neuropeptide Y and peptide YY. The chain is Putative neuropeptide Y receptor 11 (npr-11) from Caenorhabditis elegans.